A 194-amino-acid chain; its full sequence is Acid tolerance regulatory protein ActR (194 aa).

In terms of domain architecture, Response regulatory spans 24-138 (SLLIVDDDTA…DILAALIQRP (115 aa)). Asp73 is modified (4-aspartylphosphate).

In terms of processing, phosphorylated by ActS.

Member of the two-component regulatory system ActS/ActR acting in acid tolerance. These data implicate that a two-component sensor may be involved in pH sensing and/or response. This Sinorhizobium medicae (strain WSM419) (Ensifer medicae) protein is Acid tolerance regulatory protein ActR (actR).